Reading from the N-terminus, the 200-residue chain is Fibrillarin-like rRNA/tRNA 2'-O-methyltransferase (200 aa).

S-adenosyl-L-methionine-binding positions include 62–63 (TT), 78–79 (EF), 103–104 (DA), and 123–126 (DVAQ).

It belongs to the methyltransferase superfamily. Fibrillarin family. Interacts with nop5. Component of box C/D small ribonucleoprotein (sRNP) particles that contain rpl7ae, FlpA and nop5, plus a guide RNA.

Involved in pre-rRNA and tRNA processing. Utilizes the methyl donor S-adenosyl-L-methionine to catalyze the site-specific 2'-hydroxyl methylation of ribose moieties in rRNA and tRNA. Site specificity is provided by a guide RNA that base pairs with the substrate. Methylation occurs at a characteristic distance from the sequence involved in base pairing with the guide RNA. The sequence is that of Fibrillarin-like rRNA/tRNA 2'-O-methyltransferase from Methanoculleus marisnigri (strain ATCC 35101 / DSM 1498 / JR1).